Consider the following 263-residue polypeptide: 4'-phosphopantetheinyl transferase pptA (263 aa).

This sequence belongs to the P-Pant transferase superfamily.

It catalyses the reaction apo-[ACP] + CoA = holo-[ACP] + adenosine 3',5'-bisphosphate + H(+). Transfers the 4'-phosphopantetheine moiety from coenzyme A to a Ser of an acyl-carrier-protein. Activates the peptidyl carrier protein (PCP) domains of surfactin synthas. The protein is 4'-phosphopantetheinyl transferase pptA (pptA) of Paxillus involutus (Naked brimcap).